Consider the following 517-residue polypeptide: uncharacterized protein (517 aa).

The next 10 membrane-spanning stretches (helical) occupy residues 35–55 (FSLI…IPGI), 81–101 (IAIY…GVFN), 102–122 (IGIS…ILKV), 135–155 (IITI…VAAL), 164–184 (VVSA…LVGT), 223–243 (LVIA…TVFG), 268–288 (FLSF…VYTA), 302–322 (FGIT…LIAL), 328–348 (IVIV…AGLN), and 352–372 (ASLV…MIYI).

The protein localises to the cell membrane. This is an uncharacterized protein from Mycoplasma pneumoniae (strain ATCC 29342 / M129 / Subtype 1) (Mycoplasmoides pneumoniae).